Consider the following 260-residue polypeptide: Malonyl-[acyl-carrier protein] O-methyltransferase (260 aa).

This sequence belongs to the methyltransferase superfamily.

It catalyses the reaction malonyl-[ACP] + S-adenosyl-L-methionine = malonyl-[ACP] methyl ester + S-adenosyl-L-homocysteine. The protein operates within cofactor biosynthesis; biotin biosynthesis. In terms of biological role, converts the free carboxyl group of a malonyl-thioester to its methyl ester by transfer of a methyl group from S-adenosyl-L-methionine (SAM). It allows to synthesize pimeloyl-ACP via the fatty acid synthetic pathway. This Herminiimonas arsenicoxydans protein is Malonyl-[acyl-carrier protein] O-methyltransferase.